The following is a 102-amino-acid chain: Small ribosomal subunit protein uS10 (102 aa).

The protein belongs to the universal ribosomal protein uS10 family. In terms of assembly, part of the 30S ribosomal subunit.

Functionally, involved in the binding of tRNA to the ribosomes. The protein is Small ribosomal subunit protein uS10 of Lactobacillus helveticus (strain DPC 4571).